A 210-amino-acid chain; its full sequence is Holliday junction branch migration complex subunit RuvA (210 aa).

The interval 1 to 64 is domain I; the sequence is MIGLIEGRVC…EDAQLLYGFL (64 aa). The domain II stretch occupies residues 65 to 143; that stretch reads HPTERDVFRQ…HIQSDMSLLT (79 aa). Positions 144 to 154 are flexible linker; the sequence is EVEQQIGIAAN. The segment at 155-210 is domain III; the sequence is SEGVILAEVESALISLGYRDKEAQQAIKAARETDAGQQLVDTQSLLKLTLKQLSNF.

The protein belongs to the RuvA family. As to quaternary structure, homotetramer. Forms an RuvA(8)-RuvB(12)-Holliday junction (HJ) complex. HJ DNA is sandwiched between 2 RuvA tetramers; dsDNA enters through RuvA and exits via RuvB. An RuvB hexamer assembles on each DNA strand where it exits the tetramer. Each RuvB hexamer is contacted by two RuvA subunits (via domain III) on 2 adjacent RuvB subunits; this complex drives branch migration. In the full resolvosome a probable DNA-RuvA(4)-RuvB(12)-RuvC(2) complex forms which resolves the HJ.

The protein localises to the cytoplasm. The RuvA-RuvB-RuvC complex processes Holliday junction (HJ) DNA during genetic recombination and DNA repair, while the RuvA-RuvB complex plays an important role in the rescue of blocked DNA replication forks via replication fork reversal (RFR). RuvA specifically binds to HJ cruciform DNA, conferring on it an open structure. The RuvB hexamer acts as an ATP-dependent pump, pulling dsDNA into and through the RuvAB complex. HJ branch migration allows RuvC to scan DNA until it finds its consensus sequence, where it cleaves and resolves the cruciform DNA. In Psychrobacter sp. (strain PRwf-1), this protein is Holliday junction branch migration complex subunit RuvA.